Here is a 697-residue protein sequence, read N- to C-terminus: Glycine--tRNA ligase beta subunit (697 aa).

Belongs to the class-II aminoacyl-tRNA synthetase family. In terms of assembly, tetramer of two alpha and two beta subunits.

The protein resides in the cytoplasm. It carries out the reaction tRNA(Gly) + glycine + ATP = glycyl-tRNA(Gly) + AMP + diphosphate. The sequence is that of Glycine--tRNA ligase beta subunit from Cereibacter sphaeroides (strain ATCC 17029 / ATH 2.4.9) (Rhodobacter sphaeroides).